A 423-amino-acid chain; its full sequence is WD repeat and SOCS box-containing protein 1 (423 aa).

The disordered stretch occupies residues Asp76 to Pro100. WD repeat units follow at residues Ser125 to Asn166, Asp169 to Lys209, Gly213 to Lys252, Gly255 to Glu294, and Ala310 to Gln347. The SOCS box domain occupies Asp373 to Leu423.

In terms of assembly, component of a probable ECS E3 ubiquitin-protein ligase complex that contains the Elongin BC complex.

Its pathway is protein modification; protein ubiquitination. Functionally, probable substrate-recognition component of a SCF-like ECS (Elongin-Cullin-SOCS-box protein) E3 ubiquitin-protein ligase complex which mediates the ubiquitination and subsequent proteasomal degradation of target proteins. The polypeptide is WD repeat and SOCS box-containing protein 1 (wsb1) (Danio rerio (Zebrafish)).